The following is a 141-amino-acid chain: Endoribonuclease YbeY (141 aa).

Zn(2+) is bound by residues histidine 105, histidine 109, and aspartate 115.

It belongs to the endoribonuclease YbeY family. The cofactor is Zn(2+).

It localises to the cytoplasm. In terms of biological role, single strand-specific metallo-endoribonuclease involved in late-stage 70S ribosome quality control and in maturation of the 3' terminus of the 16S rRNA. This chain is Endoribonuclease YbeY, found in Karelsulcia muelleri (strain GWSS) (Sulcia muelleri).